Consider the following 305-residue polypeptide: tRNA dimethylallyltransferase (305 aa).

Position 11-18 (11-18 (GPTAVGKT)) interacts with ATP. Residue 13–18 (TAVGKT) participates in substrate binding. The tract at residues 36-39 (DSMQ) is interaction with substrate tRNA.

It belongs to the IPP transferase family. In terms of assembly, monomer. Requires Mg(2+) as cofactor.

It catalyses the reaction adenosine(37) in tRNA + dimethylallyl diphosphate = N(6)-dimethylallyladenosine(37) in tRNA + diphosphate. Functionally, catalyzes the transfer of a dimethylallyl group onto the adenine at position 37 in tRNAs that read codons beginning with uridine, leading to the formation of N6-(dimethylallyl)adenosine (i(6)A). The protein is tRNA dimethylallyltransferase of Listeria innocua serovar 6a (strain ATCC BAA-680 / CLIP 11262).